The sequence spans 255 residues: Type III pantothenate kinase (255 aa).

Residue 6 to 13 (DVGNTNIV) coordinates ATP. Residues tyrosine 100 and 107 to 110 (GADR) each bind substrate. The Proton acceptor role is filled by aspartate 109. Aspartate 129 provides a ligand contact to K(+). Residue threonine 132 participates in ATP binding. Residue threonine 184 coordinates substrate.

The protein belongs to the type III pantothenate kinase family. In terms of assembly, homodimer. Requires NH4(+) as cofactor. The cofactor is K(+).

It localises to the cytoplasm. It carries out the reaction (R)-pantothenate + ATP = (R)-4'-phosphopantothenate + ADP + H(+). The protein operates within cofactor biosynthesis; coenzyme A biosynthesis; CoA from (R)-pantothenate: step 1/5. Catalyzes the phosphorylation of pantothenate (Pan), the first step in CoA biosynthesis. The chain is Type III pantothenate kinase from Thermoanaerobacter sp. (strain X514).